The chain runs to 242 residues: uncharacterized protein (242 aa).

3 residues coordinate S-adenosyl-L-methionine: Gly198, Ile218, and Leu227.

This sequence belongs to the class IV-like SAM-binding methyltransferase superfamily. RNA methyltransferase TrmH family.

This is an uncharacterized protein from Mycoplasma pneumoniae (strain ATCC 29342 / M129 / Subtype 1) (Mycoplasmoides pneumoniae).